A 236-amino-acid polypeptide reads, in one-letter code: Orotidine 5'-phosphate decarboxylase (236 aa).

Substrate is bound by residues aspartate 16, lysine 38, 65 to 74 (DLKLHDIGNT), threonine 123, arginine 184, glutamine 193, glycine 213, and arginine 214. Lysine 67 serves as the catalytic Proton donor.

This sequence belongs to the OMP decarboxylase family. Type 1 subfamily. Homodimer.

It carries out the reaction orotidine 5'-phosphate + H(+) = UMP + CO2. The protein operates within pyrimidine metabolism; UMP biosynthesis via de novo pathway; UMP from orotate: step 2/2. Catalyzes the decarboxylation of orotidine 5'-monophosphate (OMP) to uridine 5'-monophosphate (UMP). The sequence is that of Orotidine 5'-phosphate decarboxylase from Methylobacterium sp. (strain 4-46).